Here is a 647-residue protein sequence, read N- to C-terminus: MNKHSGNRTAIDPAALEMSIASATEALLAYRHADGHWAFELEADSTIPSEYILLRHYLAEPIDVVLEAKIGNYLRRTQGAHGGWPLVHDGPFDMSASVKSYFALKMIGDSVDAAHMVKAREAIRARGGAANSNVLTRFLLALYGVVSWRAVPVLPIEIVLLPIWSPFHLYKISYWARTTIVPLMVLAVLKPRAKNPKGVGIEELFLQDTKSVGMNPKAPHQSWGWFLLFRGIDGILRVIEPHLPKKLRERAIASALAFTEERLNGEDGMGAIYPSMANIVMMYDALGKDDHFPPRAIARRAIDKLLVIGEEEAYCQPCLSPVWDTALTCHALQEVGGANAVAKAKQGLDWLKPRQVLDVKGDWAVKAPNIRPGGWPFQYNNAHYPDLDDTAVVVMAMDRAQRHAGSKEYATAIARGREWIEGMQSRDGGWAAFDVNNLEYYLNNLPFADHGALLDPPTEDVTARCVSMLAQVGEFTQRSKAVAEGIAYLRRTQHAEGSWYGRWGLNYIYGTWSVLCALNAAGIDHQDPMIRKAVEWLVSIQSWDGGWGEDAISYRLDYSGYEQAPSTSSQTAWALLGLMAAGEVEHPAVARGVNYLKNAQTENGLWDEQRYTATGFPRVFYLRYHGYSKFFPLWALARYRNLRSTNV.

The stretch at 67–108 is one PFTB 1 repeat; sequence EAKIGNYLRRTQGAHGGWPLVHDGPFDMSASVKSYFALKMIG. The active-site Proton donor is the D388. PFTB repeat units follow at residues 413–454 and 530–577; these read IARG…GALL and IRKA…ALLG.

Belongs to the terpene cyclase/mutase family.

The catalysed reaction is squalene = hop-22(29)-ene. It carries out the reaction squalene + H2O = hopan-22-ol. It functions in the pathway secondary metabolite biosynthesis; hopanoid biosynthesis. Its function is as follows. Catalyzes the cyclization of squalene into hopene. Probably part of an operon y4aABCD involved in the synthesis of an isoprenoid compound. The polypeptide is Probable squalene--hopene cyclase (shc) (Sinorhizobium fredii (strain NBRC 101917 / NGR234)).